A 62-amino-acid chain; its full sequence is MAKKCAISGKGPMSGNNVSHAKNRTKRRFLLNLRTVRIALDDGTTRKIKISARELRTLKKNS.

Positions 1–22 are disordered; that stretch reads MAKKCAISGKGPMSGNNVSHAK.

The protein belongs to the bacterial ribosomal protein bL28 family.

The chain is Large ribosomal subunit protein bL28 from Sulfurimonas denitrificans (strain ATCC 33889 / DSM 1251) (Thiomicrospira denitrificans (strain ATCC 33889 / DSM 1251)).